A 146-amino-acid chain; its full sequence is D-aminoacyl-tRNA deacylase (146 aa).

A Gly-cisPro motif, important for rejection of L-amino acids motif is present at residues 138-139; the sequence is GP.

It belongs to the DTD family. In terms of assembly, homodimer.

The protein localises to the cytoplasm. It carries out the reaction glycyl-tRNA(Ala) + H2O = tRNA(Ala) + glycine + H(+). It catalyses the reaction a D-aminoacyl-tRNA + H2O = a tRNA + a D-alpha-amino acid + H(+). In terms of biological role, an aminoacyl-tRNA editing enzyme that deacylates mischarged D-aminoacyl-tRNAs. Also deacylates mischarged glycyl-tRNA(Ala), protecting cells against glycine mischarging by AlaRS. Acts via tRNA-based rather than protein-based catalysis; rejects L-amino acids rather than detecting D-amino acids in the active site. By recycling D-aminoacyl-tRNA to D-amino acids and free tRNA molecules, this enzyme counteracts the toxicity associated with the formation of D-aminoacyl-tRNA entities in vivo and helps enforce protein L-homochirality. The polypeptide is D-aminoacyl-tRNA deacylase (Stenotrophomonas maltophilia (strain R551-3)).